We begin with the raw amino-acid sequence, 267 residues long: Actin maturation protease (267 aa).

A disordered region spans residues 1–32; the sequence is MSNISSVAPPPPPPPMIVTPSTPATTKERPVG. Residues 8–17 show a composition bias toward pro residues; sequence APPPPPPPMI. The interval 74 to 188 is peptidase C39-like; sequence SIVQVGPTCG…WALIVGYLVD (115 aa). The active site involves cysteine 82.

Belongs to the ACTMAP family.

It carries out the reaction N-terminal N(alpha)-acetyl-L-cysteinyl-L-aspartyl-[protein] + H2O = N-terminal L-aspartyl-[protein] + N-acetyl-L-cysteine. Actin maturation protease that specifically mediates the cleavage of immature acetylated N-terminal actin, thereby contributing to actin maturation. This chain is Actin maturation protease, found in Drosophila melanogaster (Fruit fly).